A 478-amino-acid polypeptide reads, in one-letter code: Ribosomal RNA small subunit methyltransferase F (478 aa).

Residues 121-127 (ASAPGSK), Glu-145, Asp-172, and Asp-190 each bind S-adenosyl-L-methionine. Cys-243 (nucleophile) is an active-site residue.

It belongs to the class I-like SAM-binding methyltransferase superfamily. RsmB/NOP family.

The protein resides in the cytoplasm. The catalysed reaction is cytidine(1407) in 16S rRNA + S-adenosyl-L-methionine = 5-methylcytidine(1407) in 16S rRNA + S-adenosyl-L-homocysteine + H(+). Its function is as follows. Specifically methylates the cytosine at position 1407 (m5C1407) of 16S rRNA. This chain is Ribosomal RNA small subunit methyltransferase F, found in Shewanella woodyi (strain ATCC 51908 / MS32).